The sequence spans 363 residues: Phospho-N-acetylmuramoyl-pentapeptide-transferase (363 aa).

The next 11 helical transmembrane spans lie at 4 to 24 (NLLV…NVIV), 28 to 48 (IAIL…IKYF), 72 to 92 (TPTM…LMLA), 96 to 116 (NIYV…GLID), 129 to 149 (INAT…CMIV), 169 to 189 (LTID…IGSS), 200 to 220 (GLVT…CYLA), 241 to 261 (ELTV…WYNI), 266 to 286 (IFMG…ISVI), 294 to 314 (GIIG…IYSI), and 342 to 362 (IVSR…SSLI).

This sequence belongs to the glycosyltransferase 4 family. MraY subfamily. Requires Mg(2+) as cofactor.

It is found in the cell inner membrane. The catalysed reaction is UDP-N-acetyl-alpha-D-muramoyl-L-alanyl-gamma-D-glutamyl-meso-2,6-diaminopimeloyl-D-alanyl-D-alanine + di-trans,octa-cis-undecaprenyl phosphate = di-trans,octa-cis-undecaprenyl diphospho-N-acetyl-alpha-D-muramoyl-L-alanyl-D-glutamyl-meso-2,6-diaminopimeloyl-D-alanyl-D-alanine + UMP. Its pathway is cell wall biogenesis; peptidoglycan biosynthesis. Catalyzes the initial step of the lipid cycle reactions in the biosynthesis of the cell wall peptidoglycan: transfers peptidoglycan precursor phospho-MurNAc-pentapeptide from UDP-MurNAc-pentapeptide onto the lipid carrier undecaprenyl phosphate, yielding undecaprenyl-pyrophosphoryl-MurNAc-pentapeptide, known as lipid I. This is Phospho-N-acetylmuramoyl-pentapeptide-transferase from Orientia tsutsugamushi (strain Ikeda) (Rickettsia tsutsugamushi).